Here is an 84-residue protein sequence, read N- to C-terminus: Cell division protein CrgA (84 aa).

A run of 2 helical transmembrane segments spans residues 31–51 and 60–80; these read VAPVMLAMFLIGLAWIVVFYV and ALDNWNIVVGFGFIAAGFGVS.

This sequence belongs to the CrgA family.

The protein localises to the cell membrane. Its function is as follows. Involved in cell division. Coordinates growth and cell division. Required for the formation of the sporulation septa. In Streptomyces avermitilis (strain ATCC 31267 / DSM 46492 / JCM 5070 / NBRC 14893 / NCIMB 12804 / NRRL 8165 / MA-4680), this protein is Cell division protein CrgA.